Here is a 129-residue protein sequence, read N- to C-terminus: Histone H2A-IV (129 aa).

A disordered region spans residues 1–22; that stretch reads MSGRGKQGGKARAKAKSRSSRA. Serine 2 carries the post-translational modification N-acetylserine. A Phosphoserine modification is found at serine 2. Lysine 6 carries the post-translational modification N6-(2-hydroxyisobutyryl)lysine. An N6-acetyllysine mark is found at lysine 6 and lysine 10. Residues 7–19 show a composition bias toward basic residues; the sequence is QGGKARAKAKSRS. Position 10 is an N6-(2-hydroxyisobutyryl)lysine; alternate (lysine 10). Lysine 10 is modified (N6-lactoyllysine; alternate). The residue at position 10 (lysine 10) is an N6-succinyllysine. Glycyl lysine isopeptide (Lys-Gly) (interchain with G-Cter in ubiquitin) cross-links involve residues lysine 14 and lysine 16. Residue lysine 37 is modified to N6-(2-hydroxyisobutyryl)lysine; alternate. An N6-(2-hydroxyisobutyryl)lysine mark is found at lysine 75 and lysine 76. At lysine 96 the chain carries N6-(2-hydroxyisobutyryl)lysine; alternate. Position 96 is an N6-succinyllysine (lysine 96). Lysine 96 bears the N6-glutaryllysine; alternate mark. Lysine 100 is subject to N6-glutaryllysine. Glutamine 105 carries the post-translational modification N5-methylglutamine. Lysine 119 is modified (N6-(2-hydroxyisobutyryl)lysine; alternate). N6-glutaryllysine; alternate occurs at positions 119 and 120. A Glycyl lysine isopeptide (Lys-Gly) (interchain with G-Cter in ubiquitin) cross-link involves residue lysine 120.

This sequence belongs to the histone H2A family. In terms of assembly, the nucleosome is a histone octamer containing two molecules each of H2A, H2B, H3 and H4 assembled in one H3-H4 heterotetramer and two H2A-H2B heterodimers. The octamer wraps approximately 147 bp of DNA. Post-translationally, monoubiquitination of Lys-120 (H2AK119Ub) gives a specific tag for epigenetic transcriptional repression. Following DNA double-strand breaks (DSBs), it is ubiquitinated through 'Lys-63' linkage of ubiquitin moieties, leading to the recruitment of repair proteins to sites of DNA damage. H2AK119Ub and ionizing radiation-induced 'Lys-63'-linked ubiquitination are distinct events. Phosphorylation on Ser-2 is enhanced during mitosis. Phosphorylation on Ser-2 directly represses transcription. In terms of processing, glutamine methylation at Gln-105 (H2AQ104me) by FBL is specifically dedicated to polymerase I. It is present at 35S ribosomal DNA locus and impairs binding of the FACT complex.

It localises to the nucleus. The protein localises to the chromosome. Functionally, core component of nucleosome. Nucleosomes wrap and compact DNA into chromatin, limiting DNA accessibility to the cellular machineries which require DNA as a template. Histones thereby play a central role in transcription regulation, DNA repair, DNA replication and chromosomal stability. DNA accessibility is regulated via a complex set of post-translational modifications of histones, also called histone code, and nucleosome remodeling. The protein is Histone H2A-IV of Gallus gallus (Chicken).